Consider the following 549-residue polypeptide: Glucose-6-phosphate isomerase (549 aa).

The active-site Proton donor is glutamate 355. Active-site residues include histidine 386 and lysine 514.

The protein belongs to the GPI family.

It is found in the cytoplasm. The enzyme catalyses alpha-D-glucose 6-phosphate = beta-D-fructose 6-phosphate. It participates in carbohydrate biosynthesis; gluconeogenesis. Its pathway is carbohydrate degradation; glycolysis; D-glyceraldehyde 3-phosphate and glycerone phosphate from D-glucose: step 2/4. Functionally, catalyzes the reversible isomerization of glucose-6-phosphate to fructose-6-phosphate. This is Glucose-6-phosphate isomerase from Buchnera aphidicola subsp. Acyrthosiphon pisum (strain 5A).